The sequence spans 124 residues: UPF0102 protein HEAR0176 (124 aa).

The protein belongs to the UPF0102 family.

This is UPF0102 protein HEAR0176 from Herminiimonas arsenicoxydans.